The sequence spans 1070 residues: DNA-directed RNA polymerase subunit beta (1070 aa).

It belongs to the RNA polymerase beta chain family. In plastids the minimal PEP RNA polymerase catalytic core is composed of four subunits: alpha, beta, beta', and beta''. When a (nuclear-encoded) sigma factor is associated with the core the holoenzyme is formed, which can initiate transcription.

The protein resides in the plastid. It is found in the chloroplast. It carries out the reaction RNA(n) + a ribonucleoside 5'-triphosphate = RNA(n+1) + diphosphate. Functionally, DNA-dependent RNA polymerase catalyzes the transcription of DNA into RNA using the four ribonucleoside triphosphates as substrates. In Lotus japonicus (Lotus corniculatus var. japonicus), this protein is DNA-directed RNA polymerase subunit beta.